The following is a 551-amino-acid chain: Serendipity locus protein alpha (551 aa).

It is found in the cytoplasm. Its subcellular location is the cell membrane. Its function is as follows. Required for the cellularization of the syncytial blastoderm embryo. Involved in the localization of the actin filaments just prior to and during plasma membrane invagination. Sry-alpha together with nullo and bnk may provide auxiliary functions, by acting both to stabilize a large and dynamic microfilament structure and regulate its functions. The polypeptide is Serendipity locus protein alpha (Sry-alpha) (Drosophila pseudoobscura pseudoobscura (Fruit fly)).